The chain runs to 101 residues: MAKKSMIAREVKRQKLNGRYEKKRAELKSLIKGVETPDEQREAAIVALQKLPRDSAATRQRNRCQLTGRPHGFYRKFGLGRNKLRECVMRGEVPGVVKASW.

This sequence belongs to the universal ribosomal protein uS14 family. Part of the 30S ribosomal subunit. Contacts proteins S3 and S10.

In terms of biological role, binds 16S rRNA, required for the assembly of 30S particles and may also be responsible for determining the conformation of the 16S rRNA at the A site. The sequence is that of Small ribosomal subunit protein uS14 from Methylococcus capsulatus (strain ATCC 33009 / NCIMB 11132 / Bath).